A 504-amino-acid chain; its full sequence is Beta-glucosidase 24 (504 aa).

An N-terminal signal peptide occupies residues 1 to 18 (MELLWLLLLLLMASSTSS). Q47 lines the a beta-D-glucoside pocket. N75 is a glycosylation site (N-linked (GlcNAc...) asparagine). A beta-D-glucoside is bound by residues H151 and 196 to 197 (NE). E197 acts as the Proton donor in catalysis. An intrachain disulfide couples C216 to C224. An N-linked (GlcNAc...) asparagine glycan is attached at N329. Position 340 (Y340) interacts with a beta-D-glucoside. N371 is a glycosylation site (N-linked (GlcNAc...) asparagine). E411 provides a ligand contact to a beta-D-glucoside. Catalysis depends on E411, which acts as the Nucleophile. An N-linked (GlcNAc...) asparagine glycan is attached at N421. A beta-D-glucoside is bound by residues W460, 467–468 (EW), and F476.

The protein belongs to the glycosyl hydrolase 1 family.

It carries out the reaction Hydrolysis of terminal, non-reducing beta-D-glucosyl residues with release of beta-D-glucose.. This chain is Beta-glucosidase 24 (BGLU24), found in Oryza sativa subsp. japonica (Rice).